The chain runs to 221 residues: Small ribosomal subunit protein uS2c (221 aa).

The protein belongs to the universal ribosomal protein uS2 family.

Its subcellular location is the plastid. The protein resides in the chloroplast. The protein is Small ribosomal subunit protein uS2c (rps2) of Cyanidioschyzon merolae (strain NIES-3377 / 10D) (Unicellular red alga).